The chain runs to 75 residues: Sec-independent protein translocase protein TatA (75 aa).

A helical transmembrane segment spans residues 1–21 (MFGLSPAQLIILLVVILLIFG).

Belongs to the TatA/E family. As to quaternary structure, the Tat system comprises two distinct complexes: a TatABC complex, containing multiple copies of TatA, TatB and TatC subunits, and a separate TatA complex, containing only TatA subunits. Substrates initially bind to the TatABC complex, which probably triggers association of the separate TatA complex to form the active translocon.

The protein localises to the cell inner membrane. Its function is as follows. Part of the twin-arginine translocation (Tat) system that transports large folded proteins containing a characteristic twin-arginine motif in their signal peptide across membranes. TatA could form the protein-conducting channel of the Tat system. The polypeptide is Sec-independent protein translocase protein TatA (Haemophilus influenzae (strain PittEE)).